The sequence spans 1102 residues: MQETFKFLRSNSQGEAVEDKYSLETLKNHFVIRDEYNNLFRVFSGRDDFWKWEAAQPFEQKCFHEVVFGFLPQRLKFDIDFPVNKSYSNDNVDDNVDDNVYNILDMIINVIMDVFYETYSLPYNINLTREQILLTDSIGLNKKRELKYSFHIILYTYSVLNNNEAKAFTSKVLENLPKHIYPFVDPQVNKSIQNFRIIGSHKKGSMRVKMFNEELADVFETSMTTKKSDTLISTPFETTCLPCILTNVKETTSSSCDSIQQSELEEVLKFAGTLCKNHCFLRVYKNLVLFKRTSPSYCEICKRMHDKDNTLILRVTGNKVYQHCRHDNKHSLLMGSLSGTNNFVETYVEQVMSKSIEVHESILFEELPDTQKHIYDESSMREYERVPTLVVKAQMKIGKTIQLRNYLQKYYGNDSISKQQTIRFVTFRQIFSKNIQTRLPNFTLYSEVTGDLDSYERVIIQVESLFRLTSTAEPVDLLILDEVESIFNQFNSGLHKYFAPSFAIFMWMLETANHVICLDANLGNRTYNILQRFRGDVPIFFHWNQYQKAQNDMYYFTSSREIWLNNLLKDLLEDKKIVIPTNSLMEARLLQTFIQKKFPEKKIGFYSSKSSAHERESHFNNVSYYWGLIDILIYTPTISAGVSYEDKRFDVLYGFFNNMSCDVETCCQMLGRVRELKSKCYKICLQGKQNYFPETIEDIEMFTLQKRDTLFQTISNHQLSFTYCKETGRPIYYKTPYYHLWLETMRIQHLSKNHFITRFINQVADTGAKVFILTGEKLETVKQYTSIKMEIKHQDYVNVASAETIDANKALQIKQNLKEGITVDQRDLFAYEKYKLLEFYAWHGNKITPKFVEQYNSFMTKQNYTGRVQISRGKTVYESLTMLQTQELNFHQWAMQHAEHHDLQFNYSFQSHMYAIMLLTKCGFKCVQDPNILTNEQLMTKLVDEFVQYDLSAVSFEFKLKKPNKMDPQTILKFINKVLGLRYGLKIHHNKGNYYIKNTKAGSLIPFVRQPIKQSPCVVSNLLPITESSSTKEEISSTKEETYSTKEETYSTKEETCSIKEEISPIKEETCSIKEEISPIKEETCSIKEETSSIKEETFTET.

Disordered stretches follow at residues 1031 to 1057 and 1082 to 1102; these read TKEEISSTKEETYSTKEETYSTKEETC and EETCSIKEETSSIKEETFTET.

Belongs to the asfivirus F1055L family.

Functionally, may be involved in DNA replication. The polypeptide is Putative helicase/primase complex protein (African swine fever virus (isolate Tick/Malawi/Lil 20-1/1983) (ASFV)).